Here is a 276-residue protein sequence, read N- to C-terminus: Small ribosomal subunit protein uS3 (276 aa).

The KH type-2 domain maps to 17–86; that stretch reads VDEYLAKELD…NPQIDVQDVG (70 aa). Residues 193–276 are disordered; that stretch reads FQINAPPKEP…AETHGDIQDR (84 aa). Over residues 214-227 the composition is skewed to low complexity; that stretch reads EAEPSQAAETQEQQ. Basic and acidic residues-rich tracts occupy residues 228 to 240 and 258 to 276; these read AGEK…RLLD and PESR…IQDR.

It belongs to the universal ribosomal protein uS3 family. In terms of assembly, part of the 30S ribosomal subunit.

In terms of biological role, binds the lower part of the 30S subunit head. In Methanothrix thermoacetophila (strain DSM 6194 / JCM 14653 / NBRC 101360 / PT) (Methanosaeta thermophila), this protein is Small ribosomal subunit protein uS3.